We begin with the raw amino-acid sequence, 310 residues long: AMMECR1-like protein (310 aa).

The tract at residues Leu-26–Pro-92 is disordered. Composition is skewed to polar residues over residues Gly-28 to Asp-66 and Ser-74 to Gly-84. Ser-74 carries the post-translational modification Phosphoserine. One can recognise an AMMECR1 domain in the interval Asn-97–Arg-291.

The polypeptide is AMMECR1-like protein (Ammecr1l) (Mus musculus (Mouse)).